Reading from the N-terminus, the 473-residue chain is Maltose fermentation regulatory protein MAL63 (473 aa).

Residues 8–34 constitute a DNA-binding region (zn(2)-C6 fungal-type); sequence CDCCRVRRVKCDRNKPCNRCIQRNLNC. A Nuclear localization signal motif is present at residues 41–49; that stretch reads KKRGPKSIR.

Belongs to the MAL13 family.

It localises to the nucleus. Functionally, regulates the coordinate transcription of structural MAL6S (maltase) and MAL6T (maltose permease) genes. The sequence is that of Maltose fermentation regulatory protein MAL63 (MAL63) from Saccharomyces cerevisiae (Baker's yeast).